The following is a 367-amino-acid chain: Alanine racemase (367 aa).

Lys-40 (proton acceptor; specific for D-alanine) is an active-site residue. An N6-(pyridoxal phosphate)lysine modification is found at Lys-40. Arg-136 is a substrate binding site. The Proton acceptor; specific for L-alanine role is filled by Tyr-263. Met-310 contributes to the substrate binding site.

The protein belongs to the alanine racemase family. The cofactor is pyridoxal 5'-phosphate.

It carries out the reaction L-alanine = D-alanine. The protein operates within amino-acid biosynthesis; D-alanine biosynthesis; D-alanine from L-alanine: step 1/1. Functionally, catalyzes the interconversion of L-alanine and D-alanine. May also act on other amino acids. This chain is Alanine racemase (alr), found in Streptococcus thermophilus (strain ATCC BAA-250 / LMG 18311).